A 115-amino-acid polypeptide reads, in one-letter code: NADH-ubiquinone oxidoreductase chain 3 (115 aa).

Helical transmembrane passes span 1–21 (MMML…VMLL), 58–78 (IAVI…IVII), and 84–104 (IMVW…GLYY).

This sequence belongs to the complex I subunit 3 family.

The protein localises to the mitochondrion membrane. It catalyses the reaction a ubiquinone + NADH + 5 H(+)(in) = a ubiquinol + NAD(+) + 4 H(+)(out). Core subunit of the mitochondrial membrane respiratory chain NADH dehydrogenase (Complex I) that is believed to belong to the minimal assembly required for catalysis. Complex I functions in the transfer of electrons from NADH to the respiratory chain. The immediate electron acceptor for the enzyme is believed to be ubiquinone. The protein is NADH-ubiquinone oxidoreductase chain 3 (ND3) of Locusta migratoria (Migratory locust).